The primary structure comprises 249 residues: Triosephosphate isomerase (249 aa).

Substrate is bound at residue 9 to 11 (NWK). The Electrophile role is filled by His-95. The active-site Proton acceptor is the Glu-167. Substrate-binding positions include Gly-173, Ser-213, and 234–235 (GG).

The protein belongs to the triosephosphate isomerase family. Homodimer.

It is found in the cytoplasm. It catalyses the reaction D-glyceraldehyde 3-phosphate = dihydroxyacetone phosphate. The protein operates within carbohydrate biosynthesis; gluconeogenesis. It participates in carbohydrate degradation; glycolysis; D-glyceraldehyde 3-phosphate from glycerone phosphate: step 1/1. In terms of biological role, involved in the gluconeogenesis. Catalyzes stereospecifically the conversion of dihydroxyacetone phosphate (DHAP) to D-glyceraldehyde-3-phosphate (G3P). This chain is Triosephosphate isomerase, found in Solibacter usitatus (strain Ellin6076).